The chain runs to 968 residues: Dynein axonemal intermediate chain 3 (968 aa).

Residues Met1–Glu33 are compositionally biased toward basic and acidic residues. 2 disordered regions span residues Met1–Pro39 and Lys136–Gln166. A compositionally biased stretch (acidic residues) spans Gly141–Glu157. WD repeat units lie at residues Glu407–Gln447, Gly480–His536, and Val712–Ser753. Positions Leu830–Arg857 form a coiled coil. Residues Lys897 to Glu919 are compositionally biased toward basic and acidic residues. Residues Lys897–Val930 are disordered.

As to quaternary structure, part of the multisubunit axonemal dynein complex formed at least of two heavy chains and a number of intermediate and light chains.

It localises to the cytoplasm. Its function is as follows. May be involved in the regulation of cilia function. The protein is Dynein axonemal intermediate chain 3 (dnai3) of Danio rerio (Zebrafish).